The primary structure comprises 418 residues: Serine hydroxymethyltransferase (418 aa).

(6S)-5,6,7,8-tetrahydrofolate-binding positions include L120 and 124-126 (GHL). K229 carries the N6-(pyridoxal phosphate)lysine modification.

The protein belongs to the SHMT family. Homodimer. Requires pyridoxal 5'-phosphate as cofactor.

It is found in the cytoplasm. It carries out the reaction (6R)-5,10-methylene-5,6,7,8-tetrahydrofolate + glycine + H2O = (6S)-5,6,7,8-tetrahydrofolate + L-serine. The protein operates within one-carbon metabolism; tetrahydrofolate interconversion. It participates in amino-acid biosynthesis; glycine biosynthesis; glycine from L-serine: step 1/1. In terms of biological role, catalyzes the reversible interconversion of serine and glycine with tetrahydrofolate (THF) serving as the one-carbon carrier. This reaction serves as the major source of one-carbon groups required for the biosynthesis of purines, thymidylate, methionine, and other important biomolecules. Also exhibits THF-independent aldolase activity toward beta-hydroxyamino acids, producing glycine and aldehydes, via a retro-aldol mechanism. In Myxococcus xanthus (strain DK1622), this protein is Serine hydroxymethyltransferase.